The chain runs to 140 residues: Large ribosomal subunit protein uL11 (140 aa).

The protein belongs to the universal ribosomal protein uL11 family. In terms of assembly, part of the ribosomal stalk of the 50S ribosomal subunit. Interacts with L10 and the large rRNA to form the base of the stalk. L10 forms an elongated spine to which L12 dimers bind in a sequential fashion forming a multimeric L10(L12)X complex. One or more lysine residues are methylated.

Its function is as follows. Forms part of the ribosomal stalk which helps the ribosome interact with GTP-bound translation factors. The protein is Large ribosomal subunit protein uL11 of Symbiobacterium thermophilum (strain DSM 24528 / JCM 14929 / IAM 14863 / T).